The following is an 827-amino-acid chain: Periplasmic nitrate reductase (827 aa).

Positions 1–32 (MELNRRDFMKANAAMAAAAAAGMTIPVKNVYA) form a signal peptide, tat-type signal. Positions 37 to 93 (IRWDKAPCRFCGTGCSVLVGTKDGRVVATQGDPDAEVNRGLNCIKGYFLSKIMYGAD) constitute a 4Fe-4S Mo/W bis-MGD-type domain. Positions 44, 47, 51, and 79 each coordinate [4Fe-4S] cluster. Mo-bis(molybdopterin guanine dinucleotide)-binding positions include lysine 81, glutamine 148, asparagine 173, cysteine 177, 210 to 217 (WGSNMAEM), 241 to 245 (STFEH), methionine 371, glutamine 375, asparagine 481, 507 to 508 (SD), lysine 530, aspartate 557, and 717 to 726 (TGRVLEHWHT). Phenylalanine 793 is a substrate binding site. Mo-bis(molybdopterin guanine dinucleotide)-binding residues include asparagine 801 and lysine 818.

It belongs to the prokaryotic molybdopterin-containing oxidoreductase family. NasA/NapA/NarB subfamily. As to quaternary structure, component of the periplasmic nitrate reductase NapAB complex composed of NapA and NapB. The cofactor is [4Fe-4S] cluster. It depends on Mo-bis(molybdopterin guanine dinucleotide) as a cofactor. In terms of processing, predicted to be exported by the Tat system. The position of the signal peptide cleavage has not been experimentally proven.

The protein resides in the periplasm. The catalysed reaction is 2 Fe(II)-[cytochrome] + nitrate + 2 H(+) = 2 Fe(III)-[cytochrome] + nitrite + H2O. In terms of biological role, catalytic subunit of the periplasmic nitrate reductase complex NapAB. Receives electrons from NapB and catalyzes the reduction of nitrate to nitrite. The sequence is that of Periplasmic nitrate reductase from Actinobacillus pleuropneumoniae serotype 7 (strain AP76).